The following is a 263-amino-acid chain: 3-methyl-2-oxobutanoate hydroxymethyltransferase (263 aa).

Residues Asp-44 and Asp-83 each contribute to the Mg(2+) site. Residues 44-45 (DS), Asp-83, and Lys-112 each bind 3-methyl-2-oxobutanoate. Glu-114 is a binding site for Mg(2+). Glu-181 acts as the Proton acceptor in catalysis.

It belongs to the PanB family. As to quaternary structure, homodecamer; pentamer of dimers. Requires Mg(2+) as cofactor.

The protein resides in the cytoplasm. The enzyme catalyses 3-methyl-2-oxobutanoate + (6R)-5,10-methylene-5,6,7,8-tetrahydrofolate + H2O = 2-dehydropantoate + (6S)-5,6,7,8-tetrahydrofolate. It participates in cofactor biosynthesis; (R)-pantothenate biosynthesis; (R)-pantoate from 3-methyl-2-oxobutanoate: step 1/2. Its function is as follows. Catalyzes the reversible reaction in which hydroxymethyl group from 5,10-methylenetetrahydrofolate is transferred onto alpha-ketoisovalerate to form ketopantoate. This chain is 3-methyl-2-oxobutanoate hydroxymethyltransferase, found in Nitrosospira multiformis (strain ATCC 25196 / NCIMB 11849 / C 71).